Here is a 1380-residue protein sequence, read N- to C-terminus: DNA-directed RNA polymerase subunit beta (1380 aa).

Belongs to the RNA polymerase beta chain family. As to quaternary structure, the RNAP catalytic core consists of 2 alpha, 1 beta, 1 beta' and 1 omega subunit. When a sigma factor is associated with the core the holoenzyme is formed, which can initiate transcription.

It carries out the reaction RNA(n) + a ribonucleoside 5'-triphosphate = RNA(n+1) + diphosphate. Functionally, DNA-dependent RNA polymerase catalyzes the transcription of DNA into RNA using the four ribonucleoside triphosphates as substrates. The chain is DNA-directed RNA polymerase subunit beta from Ehrlichia ruminantium (strain Gardel).